Consider the following 66-residue polypeptide: Large ribosomal subunit protein bL33c (66 aa).

It belongs to the bacterial ribosomal protein bL33 family.

It is found in the plastid. It localises to the chloroplast. The protein is Large ribosomal subunit protein bL33c of Glycine max (Soybean).